Reading from the N-terminus, the 260-residue chain is DNA repair protein RecO (260 aa).

This sequence belongs to the RecO family.

Its function is as follows. Involved in DNA repair and RecF pathway recombination. The chain is DNA repair protein RecO from Salinibacter ruber (strain DSM 13855 / M31).